Here is a 295-residue protein sequence, read N- to C-terminus: Tyrosine recombinase XerC (295 aa).

The Core-binding (CB) domain maps to 1-85 (MQNALQKYYD…ALRQFLAYLV (85 aa)). The Tyr recombinase domain maps to 106-285 (YLPKNIDQEQ…DFKHLTDVYD (180 aa)). Active-site residues include R145, K169, H237, R240, and H263. Y272 acts as the O-(3'-phospho-DNA)-tyrosine intermediate in catalysis.

It belongs to the 'phage' integrase family. XerC subfamily. As to quaternary structure, forms a cyclic heterotetrameric complex composed of two molecules of XerC and two molecules of XerD.

The protein localises to the cytoplasm. Site-specific tyrosine recombinase, which acts by catalyzing the cutting and rejoining of the recombining DNA molecules. The XerC-XerD complex is essential to convert dimers of the bacterial chromosome into monomers to permit their segregation at cell division. It also contributes to the segregational stability of plasmids. The protein is Tyrosine recombinase XerC of Actinobacillus succinogenes (strain ATCC 55618 / DSM 22257 / CCUG 43843 / 130Z).